Consider the following 336-residue polypeptide: Glucokinase (336 aa).

13 to 18 (ADVGGT) provides a ligand contact to ATP.

The protein belongs to the bacterial glucokinase family.

It localises to the cytoplasm. It carries out the reaction D-glucose + ATP = D-glucose 6-phosphate + ADP + H(+). The protein is Glucokinase of Cupriavidus metallidurans (strain ATCC 43123 / DSM 2839 / NBRC 102507 / CH34) (Ralstonia metallidurans).